The chain runs to 486 residues: uncharacterized protein (486 aa).

Residue 24-35 (IVHLGFGAFHRA) participates in NAD(+) binding.

Belongs to the mannitol dehydrogenase family. UxuB subfamily.

This is an uncharacterized protein from Escherichia coli (strain K12).